The chain runs to 1786 residues: Transcription initiation factor TFIID subunit 1b (1786 aa).

Disordered stretches follow at residues 54–83 (EDYD…PVVL) and 350–372 (FGSR…PQLL). Positions 61-83 (GQEKEHVPVEKSFDSEEREPVVL) are enriched in basic and acidic residues. The segment covering 352-362 (SRGSQSTNEST) has biased composition (polar residues). The Ubiquitin-like domain occupies 574-650 (MTIVVKSLGG…VHLLRTKVHL (77 aa)). Residues 1303–1313 (MKTNKHCPKYR) show a composition bias toward basic residues. 3 disordered regions span residues 1303–1382 (MKTN…DVAA), 1397–1471 (LKIS…KDQA), and 1596–1634 (SERE…ESGQ). Residues 1357 to 1377 (TKISVNEATKVGDSTSKTPGS) are compositionally biased toward polar residues. Basic residues predominate over residues 1397–1407 (LKISSKAKPKA). A compositionally biased stretch (polar residues) spans 1433–1464 (HNPSVSGQLLPSTETDQAASSRYTTSVPQPSL). Coiled-coil stretches lie at residues 1591–1620 (REVI…LENY) and 1752–1786 (LADE…DSLR). Basic residues predominate over residues 1604-1613 (RKAKQKKKLQ). One can recognise a Bromo domain in the interval 1656 to 1774 (KRRKKGQVGL…DEYRDELKEA (119 aa)).

Belongs to the TAF1 family. As to quaternary structure, component of the TFIID complex. TFIID is composed of TATA binding protein (TBP) and a number of TBP-associated factors (TAFs) whose MWs range from 14-217 kDa. In terms of tissue distribution, expressed in roots, shoots, leaves and inflorescences.

It localises to the nucleus. Functionally, TAFs are components of the transcription factor IID (TFIID) complex that is essential for mediating regulation of RNA polymerase transcription. Core scaffold of the TFIID complex. Acts as a histone acetyltransferase involved in the light regulation of growth and gene expression. Required for H3K9, H3K27, and H4K12 acetylation on the target promoters. In Arabidopsis thaliana (Mouse-ear cress), this protein is Transcription initiation factor TFIID subunit 1b (TAF1B).